The primary structure comprises 370 residues: Arginine kinase (370 aa).

The region spanning 6-89 (QKKYPAKDDF…FDPVIEEYHN (84 aa)) is the Phosphagen kinase N-terminal domain. One can recognise a Phosphagen kinase C-terminal domain in the interval 115–358 (YVISSRVRTG…KVLIEMEKKL (244 aa)). Residues 118 to 122 (SSRVR) and His181 contribute to the ATP site. Residue Glu222 coordinates substrate. Arg226 lines the ATP pocket. Cys274 provides a ligand contact to substrate. ATP contacts are provided by residues 283-287 (RCSVH) and 311-316 (RGTSGE). Substrate is bound at residue Glu316.

The protein belongs to the ATP:guanido phosphotransferase family. As to quaternary structure, homodimer. In terms of processing, the N-terminus is blocked.

The catalysed reaction is L-arginine + ATP = N(omega)-phospho-L-arginine + ADP + H(+). This chain is Arginine kinase (AK), found in Stichopus japonicus (Sea cucumber).